The primary structure comprises 580 residues: Acyl-coenzyme A synthetase ACSM3, mitochondrial (580 aa).

A mitochondrion-targeting transit peptide spans 1 to 21 (MAMLLRARCFHRLAIPDPRRI). Residues Lys67 and Lys100 each carry the N6-succinyllysine modification. N6-acetyllysine is present on Lys151. Residues 229–237 (TSGTTGPPK), 368–373 (EGYGQT), Asp455, Arg470, and Lys566 contribute to the ATP site.

The protein belongs to the ATP-dependent AMP-binding enzyme family. Mg(2+) is required as a cofactor. It depends on Mn(2+) as a cofactor.

The protein localises to the mitochondrion. Its subcellular location is the mitochondrion matrix. The catalysed reaction is a medium-chain fatty acid + ATP + CoA = a medium-chain fatty acyl-CoA + AMP + diphosphate. It catalyses the reaction propanoate + ATP + CoA = propanoyl-CoA + AMP + diphosphate. The enzyme catalyses butanoate + ATP + CoA = butanoyl-CoA + AMP + diphosphate. It carries out the reaction 2-methylpropanoate + ATP + CoA = 2-methylpropanoyl-CoA + AMP + diphosphate. The catalysed reaction is 2-methylbutanoate + ATP + CoA = 2-methylbutanoyl-CoA + AMP + diphosphate. It catalyses the reaction octanoate + ATP + CoA = octanoyl-CoA + AMP + diphosphate. Functionally, catalyzes the activation of fatty acids by CoA to produce an acyl-CoA, the first step in fatty acid metabolism. Capable of activating medium-chain fatty acids with a preference for isobutyrate among fatty acids with 2-6 carbon atoms. In Rattus norvegicus (Rat), this protein is Acyl-coenzyme A synthetase ACSM3, mitochondrial (Acsm3).